Here is a 492-residue protein sequence, read N- to C-terminus: N-succinylglutamate 5-semialdehyde dehydrogenase (492 aa).

Residue 220–225 (GSANTG) participates in NAD(+) binding. Catalysis depends on residues E243 and C277.

It belongs to the aldehyde dehydrogenase family. AstD subfamily.

The catalysed reaction is N-succinyl-L-glutamate 5-semialdehyde + NAD(+) + H2O = N-succinyl-L-glutamate + NADH + 2 H(+). It functions in the pathway amino-acid degradation; L-arginine degradation via AST pathway; L-glutamate and succinate from L-arginine: step 4/5. Catalyzes the NAD-dependent reduction of succinylglutamate semialdehyde into succinylglutamate. In Escherichia coli O127:H6 (strain E2348/69 / EPEC), this protein is N-succinylglutamate 5-semialdehyde dehydrogenase.